The sequence spans 138 residues: Sec-independent protein translocase protein TatB (138 aa).

A helical transmembrane segment spans residues 1-21; sequence MFDIGATELLVIAIVAILVIG. The interval 74–138 is disordered; it reads MAKHPADQMQ…EPRLPLEGRD (65 aa). Over residues 83–97 the composition is skewed to low complexity; that stretch reads QPLDAPDPALSAAEA. Positions 98–138 are enriched in basic and acidic residues; it reads RAAHTEAAKPARAAEETQADRASADEHPAASEPRLPLEGRD.

This sequence belongs to the TatB family. As to quaternary structure, the Tat system comprises two distinct complexes: a TatABC complex, containing multiple copies of TatA, TatB and TatC subunits, and a separate TatA complex, containing only TatA subunits. Substrates initially bind to the TatABC complex, which probably triggers association of the separate TatA complex to form the active translocon.

The protein localises to the cell inner membrane. Part of the twin-arginine translocation (Tat) system that transports large folded proteins containing a characteristic twin-arginine motif in their signal peptide across membranes. Together with TatC, TatB is part of a receptor directly interacting with Tat signal peptides. TatB may form an oligomeric binding site that transiently accommodates folded Tat precursor proteins before their translocation. The chain is Sec-independent protein translocase protein TatB from Erythrobacter litoralis (strain HTCC2594).